The following is a 518-amino-acid chain: Cytochrome P450 736A117 (518 aa).

N12 is a glycosylation site (N-linked (GlcNAc...) asparagine). A helical membrane pass occupies residues 17-37 (FLQPLAFTLLAIFLVLLYTWY). N185, N275, and N356 each carry an N-linked (GlcNAc...) asparagine glycan. C460 lines the heme pocket.

It belongs to the cytochrome P450 family. Requires heme as cofactor. Expressed at similar levels in fruit kernel, seedlings, leaves, stems and buds.

It is found in the membrane. In Prunus mume (Japanese apricot), this protein is Cytochrome P450 736A117.